Consider the following 157-residue polypeptide: Ubiquitin-like protein 4A (157 aa).

The Ubiquitin-like domain occupies 1-76; that stretch reads MQLTVKALQG…LNLVVKPLEK (76 aa). Residue K48 forms a Glycyl lysine isopeptide (Lys-Gly) (interchain with G-Cter in ubiquitin) linkage. The residue at position 90 (S90) is a Phosphoserine. The tract at residues 96-138 is required and sufficient for interaction with BAG6; it reads WQLISKVLARHFSIGDASRVLEQLQRDYDRSLSRLTLDDIERL.

In terms of assembly, component of the BAG6/BAT3 complex, at least composed of BAG6, UBL4A and GET4/TRC35. Interacts with BAG6; the interaction is direct and required for UBL4A protein stability. Interacts with USP13; may be indirect via BAG6. In terms of processing, polyubiquitinated. Ubiquitination by AMFR and deubiquitination by USP13 may regulate the interaction between the BAG6/BAT complex and SGTA and therefore may regulate client proteins fate.

The protein resides in the cytoplasm. The protein localises to the cytosol. It is found in the nucleus. In terms of biological role, as part of a cytosolic protein quality control complex, the BAG6/BAT3 complex, maintains misfolded and hydrophobic patches-containing proteins in a soluble state and participates in their proper delivery to the endoplasmic reticulum or alternatively can promote their sorting to the proteasome where they undergo degradation. The BAG6/BAT3 complex is involved in the post-translational delivery of tail-anchored/type II transmembrane proteins to the endoplasmic reticulum membrane. Recruited to ribosomes, it interacts with the transmembrane region of newly synthesized tail-anchored proteins and together with SGTA and ASNA1 mediates their delivery to the endoplasmic reticulum. Client proteins that cannot be properly delivered to the endoplasmic reticulum are ubiquitinated and sorted to the proteasome. Similarly, the BAG6/BAT3 complex also functions as a sorting platform for proteins of the secretory pathway that are mislocalized to the cytosol either delivering them to the proteasome for degradation or to the endoplasmic reticulum. The BAG6/BAT3 complex also plays a role in the endoplasmic reticulum-associated degradation (ERAD), a quality control mechanism that eliminates unwanted proteins of the endoplasmic reticulum through their retrotranslocation to the cytosol and their targeting to the proteasome. It maintains these retrotranslocated proteins in an unfolded yet soluble state condition in the cytosol to ensure their proper delivery to the proteasome. The chain is Ubiquitin-like protein 4A (Ubl4a) from Rattus norvegicus (Rat).